The following is a 282-amino-acid chain: Aldo-keto reductase MT3049 (282 aa).

Tyr57 acts as the Proton donor in catalysis. Residues Leu197, Val235, Arg237, Ser238, Ala239, Arg243, Ser246, Asn247, and Arg273 each contribute to the NADPH site.

It belongs to the aldo/keto reductase family.

The protein is Aldo-keto reductase MT3049 of Mycobacterium tuberculosis (strain CDC 1551 / Oshkosh).